Consider the following 304-residue polypeptide: Acetyl-coenzyme A carboxylase carboxyl transferase subunit beta (304 aa).

Positions 26–295 constitute a CoA carboxyltransferase N-terminal domain; it reads VWTKCTSCEQ…PFVEPELVEN (270 aa). Zn(2+) is bound by residues cysteine 30, cysteine 33, cysteine 49, and cysteine 52. The segment at 30-52 adopts a C4-type zinc-finger fold; it reads CTSCEQVLYRDELRRHLEVCPKC. The segment at 281–304 is disordered; the sequence is SNKPSPFVEPELVENEEQSKSDNE.

The protein belongs to the AccD/PCCB family. Acetyl-CoA carboxylase is a heterohexamer composed of biotin carboxyl carrier protein (AccB), biotin carboxylase (AccC) and two subunits each of ACCase subunit alpha (AccA) and ACCase subunit beta (AccD). Zn(2+) is required as a cofactor.

The protein resides in the cytoplasm. It catalyses the reaction N(6)-carboxybiotinyl-L-lysyl-[protein] + acetyl-CoA = N(6)-biotinyl-L-lysyl-[protein] + malonyl-CoA. It participates in lipid metabolism; malonyl-CoA biosynthesis; malonyl-CoA from acetyl-CoA: step 1/1. Its function is as follows. Component of the acetyl coenzyme A carboxylase (ACC) complex. Biotin carboxylase (BC) catalyzes the carboxylation of biotin on its carrier protein (BCCP) and then the CO(2) group is transferred by the transcarboxylase to acetyl-CoA to form malonyl-CoA. This Pasteurella multocida (strain Pm70) protein is Acetyl-coenzyme A carboxylase carboxyl transferase subunit beta.